Here is a 103-residue protein sequence, read N- to C-terminus: Large ribosomal subunit protein uL24 (103 aa).

The protein belongs to the universal ribosomal protein uL24 family. In terms of assembly, part of the 50S ribosomal subunit.

In terms of biological role, one of two assembly initiator proteins, it binds directly to the 5'-end of the 23S rRNA, where it nucleates assembly of the 50S subunit. One of the proteins that surrounds the polypeptide exit tunnel on the outside of the subunit. This Latilactobacillus sakei subsp. sakei (strain 23K) (Lactobacillus sakei subsp. sakei) protein is Large ribosomal subunit protein uL24.